A 325-amino-acid chain; its full sequence is WUSCHEL-related homeobox 8 (325 aa).

The segment at residues 51 to 115 is a DNA-binding region (homeobox; WUS-type); sequence DPKPRWNPKP…NRKSRAKHKL (65 aa).

This sequence belongs to the WUS homeobox family. Expressed only in the egg cell. Not detected in the pollen tube. Expressed in the zygote, the basal cell, and later the suspensor. Expressed in all suspensor cells, except the hypophysis, and in the embryo surrounding region (ESR) endosperm cells. Strongly expressed in the suspensor cells, with a weak expression also detected throughout the developing embryo.

The protein localises to the nucleus. Its function is as follows. Probable transcription factor, which may be involved in embryonic patterning. May be required for basal embryo development after fertilization. Acts partially redundantly with STIP in promoting embryonic cell division and proliferation. Promotes cotyledon boundary formation by maintaining the symmetry in CUC genes expression domains. The sequence is that of WUSCHEL-related homeobox 8 from Arabidopsis thaliana (Mouse-ear cress).